The primary structure comprises 726 residues: Sensory/regulatory protein RpfC (726 aa).

The next 5 helical transmembrane spans lie at 23–40 (NLIR…LGWR), 52–72 (TWLI…AILL), 95–115 (IMAI…WVTI), 128–148 (AATA…PYWK), and 152–172 (YLSW…DSLL). A Histidine kinase domain is found at 195-417 (NMSHEFRTPL…VFWFELPMAI (223 aa)). At His-198 the chain carries Phosphohistidine; by autocatalysis. In terms of domain architecture, Response regulatory spans 463–581 (RMLVADDHEA…KLLDTLADLA (119 aa)). Asp-512 is subject to 4-aspartylphosphate. One can recognise an HPt domain in the interval 618–711 (GEEFERQFVR…KAGKDALDAR (94 aa)). Residue His-657 is modified to Phosphohistidine.

In terms of assembly, at low DSF concentrations, interacts with RpfF. Autophosphorylated. Activation may require a sequential transfer of a phosphate group from a His in the primary transmitter domain, to an Asp in the receiver domain and to a His in the secondary transmitter domain.

The protein localises to the cell inner membrane. The catalysed reaction is ATP + protein L-histidine = ADP + protein N-phospho-L-histidine.. Its activity is regulated as follows. Binding of DSF to the sensor region causes allosteric change, which facilitates RpfC autophosphorylation. Hybrid sensor kinase that regulates diverse biological functions through two distinct molecular mechanisms. At low cell density, the extracellular concentration of the diffusible signaling factor (DSF) is below a threshold, and unphosphorylated RpfC is involved in the negative regulation of DSF synthesis, via direct interaction with the DSF synthase RpfF. Interaction prevents synthesis of DSF, which remains at a basal level. This activity does not involve the phosphorelay mechanism and is not dependent on RpfG. Is also member of the two-component regulatory system RpfG/RpfC, which is involved in the perception and response to DSF, which is essential for cell-cell signaling. At high cell density, the level of extracellular DSF increases and binding of DSF to the sensor region of RpfC causes autophosphorylation of RpfC, which results in the release of RpfF and the activation of RpfG via a four-step phosphorelay. Activation of RpfG leads to the positive regulation of biofilm dispersal and the production of virulence factors. This Xanthomonas campestris pv. campestris (strain ATCC 33913 / DSM 3586 / NCPPB 528 / LMG 568 / P 25) protein is Sensory/regulatory protein RpfC (rpfC).